The chain runs to 91 residues: MSRSLKKGPFVDKYLQKKVEALNTANKKEVVKTWSRRSVIFPEFIGHTFAVHNGKEHIPVYVTEDMIGHKLGEFSPTRKFGGHGDDKKKKK.

The interval 72–91 (GEFSPTRKFGGHGDDKKKKK) is disordered. The span at 82–91 (GHGDDKKKKK) shows a compositional bias: basic and acidic residues.

This sequence belongs to the universal ribosomal protein uS19 family.

In terms of biological role, protein S19 forms a complex with S13 that binds strongly to the 16S ribosomal RNA. This chain is Small ribosomal subunit protein uS19, found in Spiroplasma kunkelii.